Reading from the N-terminus, the 79-residue chain is UPF0291 protein BH2353 (79 aa).

A disordered region spans residues 57–79 (GAGNDVTPDKLKQSKNKYRNDIH). Basic and acidic residues predominate over residues 63–79 (TPDKLKQSKNKYRNDIH).

This sequence belongs to the UPF0291 family.

Its subcellular location is the cytoplasm. The polypeptide is UPF0291 protein BH2353 (Halalkalibacterium halodurans (strain ATCC BAA-125 / DSM 18197 / FERM 7344 / JCM 9153 / C-125) (Bacillus halodurans)).